A 188-amino-acid polypeptide reads, in one-letter code: Elongation factor P (188 aa).

It belongs to the elongation factor P family.

Its subcellular location is the cytoplasm. It functions in the pathway protein biosynthesis; polypeptide chain elongation. Functionally, involved in peptide bond synthesis. Stimulates efficient translation and peptide-bond synthesis on native or reconstituted 70S ribosomes in vitro. Probably functions indirectly by altering the affinity of the ribosome for aminoacyl-tRNA, thus increasing their reactivity as acceptors for peptidyl transferase. The chain is Elongation factor P from Caulobacter vibrioides (strain ATCC 19089 / CIP 103742 / CB 15) (Caulobacter crescentus).